Reading from the N-terminus, the 146-residue chain is MQKIPSFISRFIQDNHVVNFAAYTIDDFWTASCFYAFDHNMARLILLTSKNTRHSQIMLHNPKIVGTISAQITDIQAIKGIQFSATSQLLTKQDTEYHSSLTHYYQRHPFARLTSSDVWLLHLDMIKYTSNEYLFAQKSIWQRHTE.

It belongs to the UPF0306 family.

This chain is UPF0306 protein HD_1359, found in Haemophilus ducreyi (strain 35000HP / ATCC 700724).